Reading from the N-terminus, the 535-residue chain is CTP synthase (535 aa).

The segment at 1–267 (MTKFIFVTGG…DDIVIKRLDL (267 aa)) is amidoligase domain. Ser-13 serves as a coordination point for CTP. Residue Ser-13 coordinates UTP. Residue 14 to 19 (SLGKGI) coordinates ATP. Tyr-54 lines the L-glutamine pocket. Position 71 (Asp-71) interacts with ATP. Asp-71 and Glu-141 together coordinate Mg(2+). CTP is bound by residues 148-150 (DIE), 188-193 (KTKPTQ), and Lys-224. Residues 188-193 (KTKPTQ) and Lys-224 contribute to the UTP site. ATP is bound at residue 240–242 (RDA). The 243-residue stretch at 293 to 535 (TIGLVGKYVS…VEAAYKHQNK (243 aa)) folds into the Glutamine amidotransferase type-1 domain. L-glutamine is bound at residue Gly-355. Catalysis depends on Cys-382, which acts as the Nucleophile; for glutamine hydrolysis. Residues 383-386 (LGMQ), Glu-406, and Arg-463 contribute to the L-glutamine site. Residues His-508 and Glu-510 contribute to the active site.

This sequence belongs to the CTP synthase family. Homotetramer.

The catalysed reaction is UTP + L-glutamine + ATP + H2O = CTP + L-glutamate + ADP + phosphate + 2 H(+). It carries out the reaction L-glutamine + H2O = L-glutamate + NH4(+). The enzyme catalyses UTP + NH4(+) + ATP = CTP + ADP + phosphate + 2 H(+). The protein operates within pyrimidine metabolism; CTP biosynthesis via de novo pathway; CTP from UDP: step 2/2. Its activity is regulated as follows. Allosterically activated by GTP, when glutamine is the substrate; GTP has no effect on the reaction when ammonia is the substrate. The allosteric effector GTP functions by stabilizing the protein conformation that binds the tetrahedral intermediate(s) formed during glutamine hydrolysis. Inhibited by the product CTP, via allosteric rather than competitive inhibition. In terms of biological role, catalyzes the ATP-dependent amination of UTP to CTP with either L-glutamine or ammonia as the source of nitrogen. Regulates intracellular CTP levels through interactions with the four ribonucleotide triphosphates. This Staphylococcus haemolyticus (strain JCSC1435) protein is CTP synthase.